A 439-amino-acid chain; its full sequence is AT-hook motif nuclear-localized protein 13 (439 aa).

Disordered stretches follow at residues 1 to 46, 69 to 216, and 342 to 439; these read MDSR…NSYN, QRLP…LGGT, and GRKQ…NSPQ. Composition is skewed to low complexity over residues 9–31 and 79–95; these read QQQQ…QQQQ and PHQP…PQQQ. A compositionally biased stretch (polar residues) spans 109–120; sequence SPSSVAATQQHS. Residues 130–139 are compositionally biased toward basic residues; that stretch reads VKKKRGRPRK. The Bipartite nuclear localization signal signature appears at 131 to 139; sequence KKKRGRPRK. Residues 131-143 constitute a DNA-binding region (a.T hook 1); that stretch reads KKKRGRPRKYAAD. Gly residues-rich tracts occupy residues 143-152 and 171-183; these read DGGGGGGGGS and YGGG…GGDS. The a.T hook 2 DNA-binding region spans 196-208; that stretch reads KRNRGRPPGSGKK. The region spanning 217–359 is the PPC domain; sequence GGVGFTPHVI…GRAQNTPEPA (143 aa). Over residues 347-357 the composition is skewed to polar residues; sequence QSAGRAQNTPE. Low complexity-rich tracts occupy residues 376-386 and 403-416; these read SPRSQGQQHSS and NNNN…FGNS. Residues 428–439 show a composition bias toward polar residues; it reads MYQNLWPGNSPQ.

The protein localises to the nucleus. Transcription factor that specifically binds AT-rich DNA sequences related to the nuclear matrix attachment regions (MARs). The polypeptide is AT-hook motif nuclear-localized protein 13 (Arabidopsis thaliana (Mouse-ear cress)).